The following is a 158-amino-acid chain: MRTVVYPGTFDPITNGHVDLIHRAARLFDRVVVAVAADTGKTPVFSTEERVELVRGSVAGDPNVEILPFEGLLVNFARTLGVSVIMRGLRAVSDFEYEFQLAGMNRRMAPDIETLFLTPAEQYAYISSSLVREIARLRGDVSTFVTPTVQAALRARFG.

T9 serves as a coordination point for substrate. ATP is bound by residues 9-10 (TF) and H17. Substrate-binding residues include K41, L73, and R87. Residues 88–90 (GLR), E98, and 123–129 (YAYISSS) each bind ATP.

It belongs to the bacterial CoaD family. In terms of assembly, homohexamer. Mg(2+) is required as a cofactor.

It localises to the cytoplasm. It carries out the reaction (R)-4'-phosphopantetheine + ATP + H(+) = 3'-dephospho-CoA + diphosphate. Its pathway is cofactor biosynthesis; coenzyme A biosynthesis; CoA from (R)-pantothenate: step 4/5. Functionally, reversibly transfers an adenylyl group from ATP to 4'-phosphopantetheine, yielding dephospho-CoA (dPCoA) and pyrophosphate. The sequence is that of Phosphopantetheine adenylyltransferase from Allochromatium vinosum (strain ATCC 17899 / DSM 180 / NBRC 103801 / NCIMB 10441 / D) (Chromatium vinosum).